The following is an 86-amino-acid chain: Photosystem I reaction center subunit PsaK (86 aa).

2 helical membrane passes run 15–35 (SWSISTAIIMVICNLLCIGLG) and 57–77 (GLPELLATTSLGHIIGAGAII).

The protein belongs to the PsaG/PsaK family.

The protein resides in the plastid. The protein localises to the chloroplast thylakoid membrane. The protein is Photosystem I reaction center subunit PsaK of Gracilaria tenuistipitata var. liui (Red alga).